A 409-amino-acid polypeptide reads, in one-letter code: LL-diaminopimelate aminotransferase (409 aa).

Substrate-binding residues include Tyr15 and Gly42. Pyridoxal 5'-phosphate contacts are provided by residues Tyr72, 108–109, Tyr132, Asn186, Tyr217, and 245–247; these read AK and SFS. Positions 109, 132, and 186 each coordinate substrate. Lys248 bears the N6-(pyridoxal phosphate)lysine mark. Pyridoxal 5'-phosphate-binding residues include Arg256 and Asn291. 2 residues coordinate substrate: Asn291 and Arg387.

This sequence belongs to the class-I pyridoxal-phosphate-dependent aminotransferase family. LL-diaminopimelate aminotransferase subfamily. As to quaternary structure, homodimer. Pyridoxal 5'-phosphate serves as cofactor.

The enzyme catalyses (2S,6S)-2,6-diaminopimelate + 2-oxoglutarate = (S)-2,3,4,5-tetrahydrodipicolinate + L-glutamate + H2O + H(+). It participates in amino-acid biosynthesis; L-lysine biosynthesis via DAP pathway; LL-2,6-diaminopimelate from (S)-tetrahydrodipicolinate (aminotransferase route): step 1/1. Functionally, involved in the synthesis of meso-diaminopimelate (m-DAP or DL-DAP), required for both lysine and peptidoglycan biosynthesis. Catalyzes the direct conversion of tetrahydrodipicolinate to LL-diaminopimelate. This chain is LL-diaminopimelate aminotransferase, found in Parabacteroides distasonis (strain ATCC 8503 / DSM 20701 / CIP 104284 / JCM 5825 / NCTC 11152).